The following is a 1438-amino-acid chain: DNA-directed RNA polymerase subunit beta' (1438 aa).

Zn(2+) is bound by residues Cys-72, Cys-74, Cys-87, and Cys-90. 3 residues coordinate Mg(2+): Asp-483, Asp-485, and Asp-487. Residues Cys-831, Cys-905, Cys-912, and Cys-915 each coordinate Zn(2+).

This sequence belongs to the RNA polymerase beta' chain family. The RNAP catalytic core consists of 2 alpha, 1 beta, 1 beta' and 1 omega subunit. When a sigma factor is associated with the core the holoenzyme is formed, which can initiate transcription. Mg(2+) serves as cofactor. Zn(2+) is required as a cofactor.

The catalysed reaction is RNA(n) + a ribonucleoside 5'-triphosphate = RNA(n+1) + diphosphate. In terms of biological role, DNA-dependent RNA polymerase catalyzes the transcription of DNA into RNA using the four ribonucleoside triphosphates as substrates. In Flavobacterium psychrophilum (strain ATCC 49511 / DSM 21280 / CIP 103535 / JIP02/86), this protein is DNA-directed RNA polymerase subunit beta'.